Here is a 218-residue protein sequence, read N- to C-terminus: Elongation factor Ts (218 aa).

The interval 82–85 (TDFV) is involved in Mg(2+) ion dislocation from EF-Tu.

The protein belongs to the EF-Ts family.

Its subcellular location is the cytoplasm. Its function is as follows. Associates with the EF-Tu.GDP complex and induces the exchange of GDP to GTP. It remains bound to the aminoacyl-tRNA.EF-Tu.GTP complex up to the GTP hydrolysis stage on the ribosome. The polypeptide is Elongation factor Ts (Prochlorococcus marinus (strain MIT 9211)).